A 489-amino-acid polypeptide reads, in one-letter code: N-succinylglutamate 5-semialdehyde dehydrogenase (489 aa).

Gly223 to Gly228 is a binding site for NAD(+). Active-site residues include Glu246 and Cys280.

The protein belongs to the aldehyde dehydrogenase family. AstD subfamily.

It carries out the reaction N-succinyl-L-glutamate 5-semialdehyde + NAD(+) + H2O = N-succinyl-L-glutamate + NADH + 2 H(+). It participates in amino-acid degradation; L-arginine degradation via AST pathway; L-glutamate and succinate from L-arginine: step 4/5. Its function is as follows. Catalyzes the NAD-dependent reduction of succinylglutamate semialdehyde into succinylglutamate. The protein is N-succinylglutamate 5-semialdehyde dehydrogenase of Aeromonas hydrophila subsp. hydrophila (strain ATCC 7966 / DSM 30187 / BCRC 13018 / CCUG 14551 / JCM 1027 / KCTC 2358 / NCIMB 9240 / NCTC 8049).